A 352-amino-acid chain; its full sequence is Ion-translocating oxidoreductase complex subunit D (352 aa).

The next 4 helical transmembrane spans lie at 20-40 (IMLL…WFFG), 44-64 (LFQI…VLSL), 78-109 (ALLT…IIIA), and 123-143 (PAMI…TSWL). The residue at position 187 (Thr187) is an FMN phosphoryl threonine. 5 consecutive transmembrane segments (helical) span residues 214–234 (VLAG…GVFL), 242–262 (WHIP…GWLF), 267–287 (LASP…FFIL), 301–321 (LIFG…GGYP), and 322–342 (DGVA…DYYT).

It belongs to the NqrB/RnfD family. In terms of assembly, the complex is composed of six subunits: RsxA, RsxB, RsxC, RsxD, RsxE and RsxG. FMN serves as cofactor.

It localises to the cell inner membrane. Part of a membrane-bound complex that couples electron transfer with translocation of ions across the membrane. Required to maintain the reduced state of SoxR. The protein is Ion-translocating oxidoreductase complex subunit D of Salmonella arizonae (strain ATCC BAA-731 / CDC346-86 / RSK2980).